Consider the following 249-residue polypeptide: MLQLRFMPGWVPRNGFFGLKETIGTVHKRFYALASEQPSRKTVKPLDSRKTFLIDTYKHLMENSSMIFFVHYNNLSKTEDHHFRFKIKQTGGKLTKVRNNLFEVYLRNSHLPDPCGFVKRKEQNWKHPLLPLLKGPTATITYEDTNPQQVAKLLKVLQSAQDKLMVIGAKVENEVLNVEKINTFKTLPTKPEMQSQLVSVLQMLSGLGLVRTLENSSNALYLTLKSHNDNQKPKEDVESTTDAESKGSK.

The transit peptide at 1–31 (MLQLRFMPGWVPRNGFFGLKETIGTVHKRFY) directs the protein to the mitochondrion. A disordered region spans residues 226-249 (SHNDNQKPKEDVESTTDAESKGSK).

Belongs to the universal ribosomal protein uL10 family. As to quaternary structure, component of the mitochondrial large ribosomal subunit (mt-LSU). Mature yeast 74S mitochondrial ribosomes consist of a small (37S) and a large (54S) subunit. The 37S small subunit contains a 15S ribosomal RNA (15S mt-rRNA) and 34 different proteins. The 54S large subunit contains a 21S rRNA (21S mt-rRNA) and 46 different proteins.

It localises to the mitochondrion. Its function is as follows. Component of the mitochondrial ribosome (mitoribosome), a dedicated translation machinery responsible for the synthesis of mitochondrial genome-encoded proteins, including at least some of the essential transmembrane subunits of the mitochondrial respiratory chain. The mitoribosomes are attached to the mitochondrial inner membrane and translation products are cotranslationally integrated into the membrane. This Saccharomyces cerevisiae (strain ATCC 204508 / S288c) (Baker's yeast) protein is Large ribosomal subunit protein uL10m (MRPL11).